A 25-amino-acid chain; its full sequence is Growth-blocking peptide (25 aa).

Residues cysteine 7 and cysteine 19 are joined by a disulfide bond. The residue at position 25 (glutamine 25) is a Glutamine amide.

This sequence belongs to the GBP/PSP1/paralytic peptide family. In terms of tissue distribution, hemolymph.

In terms of biological role, biogenic peptide that prevents, in lepidopteran, the onset of metamorphosis from larva to pupa. This growth-blocking peptide has repressive activity against juvenile hormone esterase. This chain is Growth-blocking peptide, found in Cotesia kariyai (Parasitic wasp).